Here is a 541-residue protein sequence, read N- to C-terminus: Tegument protein UL21 homolog (541 aa).

This sequence belongs to the alphaherpesvirinae UL21 protein family. As to quaternary structure, interacts (via C-terminus) with UL16.

The protein localises to the virion tegument. Its subcellular location is the host cytoplasm. The protein resides in the host nucleus. Functionally, may participate in DNA packaging/capsid maturation events. Promotes efficient incorporation of tegument proteins UL46, UL49, and US3 homologs into virions. May also play a role in capsid transport to the trans-Golgi network (TGN). The protein is Tegument protein UL21 homolog of Homo sapiens (Human).